We begin with the raw amino-acid sequence, 237 residues long: MQENRPVIALDFPEFSDVKDFLEKFDPSEKLYIKLGMELFYTAGPQVVYYVKSLGHSVFLDLKLHDIPNTVESSMRVLARLGVDMVNVHAAGGVEMMVAAKRGLEAGTPIGRQRPKLIAVTQLTSTSEEIMQNDQKIMTSLEESVINYAQKTAQAGLDGVVCSAHEVEKIKAATSKEFICLTPGIRPEGASKGDQKRVMTPKEARTIGSDYIVVGRPITQAKDPVSAYHAIKEEWNQ.

Residues D11, K34, 61-70 (DLKLHDIPNT), T124, R186, Q195, G215, and R216 each bind substrate. Catalysis depends on K63, which acts as the Proton donor.

This sequence belongs to the OMP decarboxylase family. Type 1 subfamily. As to quaternary structure, homodimer.

It catalyses the reaction orotidine 5'-phosphate + H(+) = UMP + CO2. Its pathway is pyrimidine metabolism; UMP biosynthesis via de novo pathway; UMP from orotate: step 2/2. In terms of biological role, catalyzes the decarboxylation of orotidine 5'-monophosphate (OMP) to uridine 5'-monophosphate (UMP). This is Orotidine 5'-phosphate decarboxylase from Lactococcus lactis subsp. cremoris (strain MG1363).